Here is a 425-residue protein sequence, read N- to C-terminus: Serine--tRNA ligase (425 aa).

231–233 is an L-serine binding site; the sequence is TAE. An ATP-binding site is contributed by 262 to 264; sequence RSE. E285 contacts L-serine. ATP is bound at residue 349-352; that stretch reads EISS. Residue S385 participates in L-serine binding.

The protein belongs to the class-II aminoacyl-tRNA synthetase family. Type-1 seryl-tRNA synthetase subfamily. Homodimer. The tRNA molecule binds across the dimer.

The protein resides in the cytoplasm. It carries out the reaction tRNA(Ser) + L-serine + ATP = L-seryl-tRNA(Ser) + AMP + diphosphate + H(+). It catalyses the reaction tRNA(Sec) + L-serine + ATP = L-seryl-tRNA(Sec) + AMP + diphosphate + H(+). Its pathway is aminoacyl-tRNA biosynthesis; selenocysteinyl-tRNA(Sec) biosynthesis; L-seryl-tRNA(Sec) from L-serine and tRNA(Sec): step 1/1. In terms of biological role, catalyzes the attachment of serine to tRNA(Ser). Is also able to aminoacylate tRNA(Sec) with serine, to form the misacylated tRNA L-seryl-tRNA(Sec), which will be further converted into selenocysteinyl-tRNA(Sec). This is Serine--tRNA ligase from Bacillus subtilis (strain 168).